A 498-amino-acid polypeptide reads, in one-letter code: Lysine--tRNA ligase (498 aa).

Mg(2+) is bound by residues Glu-409 and Glu-416.

This sequence belongs to the class-II aminoacyl-tRNA synthetase family. In terms of assembly, homodimer. Requires Mg(2+) as cofactor.

Its subcellular location is the cytoplasm. It catalyses the reaction tRNA(Lys) + L-lysine + ATP = L-lysyl-tRNA(Lys) + AMP + diphosphate. The chain is Lysine--tRNA ligase from Coxiella burnetii (strain CbuK_Q154) (Coxiella burnetii (strain Q154)).